The chain runs to 616 residues: MNSPGGRGKKKGSGGASNPVPPRPPPPCLAPAPPAAGPAPPPESPHKRNLYYFSYPLFVGFALLRLVAFHLGLLFVWLCQRFSRALMAAKRSSGAAPAPASASAPAPVPGGEAERVRVFHKQAFEYISIALRIDEDEKAGQKEQAVEWYKKGIEELEKGIAVIVTGQGEQCERARRLQAKMMTNLVMAKDRLQLLEKMQPVLPFSKSQTDVYNDSTNLACRNGHLQSESGAVPKRKDPLTHTSNSLPRSKTVMKTGSAGLSGHHRAPSYSGLSMVSGVKQGSGPAPTTHKGTPKTNRTNKPSTPTTATRKKKDLKNFRNVDSNLANLIMNEIVDNGTAVKFDDIAGQDLAKQALQEIVILPSLRPELFTGLRAPARGLLLFGPPGNGKTMLAKAVAAESNATFFNISAASLTSKYVGEGEKLVRALFAVARELQPSIIFIDEVDSLLCERREGEHDASRRLKTEFLIEFDGVQSAGDDRVLVMGATNRPQELDEAVLRRFIKRVYVSLPNEETRLLLLKNLLCKQGSPLTQKELAQLARMTDGYSGSDLTALAKDAALGPIRELKPEQVKNMSASEMRNIRLSDFTESLKKIKRSVSPQTLEAYIRWNKDFGDTTV.

The interval 1-43 is disordered; the sequence is MNSPGGRGKKKGSGGASNPVPPRPPPPCLAPAPPAAGPAPPPE. A required for nuclear localization region spans residues 1–50; that stretch reads MNSPGGRGKKKGSGGASNPVPPRPPPPCLAPAPPAAGPAPPPESPHKRNL. The Cytoplasmic portion of the chain corresponds to 1-56; the sequence is MNSPGGRGKKKGSGGASNPVPPRPPPPCLAPAPPAAGPAPPPESPHKRNLYYFSYP. Positions 1 to 80 are required for interaction with ATL1; that stretch reads MNSPGGRGKK…LGLLFVWLCQ (80 aa). The tract at residues 1-194 is required for midbody localization; it reads MNSPGGRGKK…LVMAKDRLQL (194 aa). The interval 1–300 is required for interaction with RTN1; the sequence is MNSPGGRGKK…GTPKTNRTNK (300 aa). The Nuclear localization signal motif lies at 4 to 11; that stretch reads PGGRGKKK. The segment covering 19-43 has biased composition (pro residues); sequence PVPPRPPPPCLAPAPPAAGPAPPPE. A required for interaction with SSNA1 and microtubules region spans residues 50–87; it reads LYYFSYPLFVGFALLRLVAFHLGLLFVWLCQRFSRALM. An intramembrane region (helical) is located at residues 57 to 77; that stretch reads LFVGFALLRLVAFHLGLLFVW. The short motif at 59-67 is the Nuclear export signal element; that stretch reads VGFALLRLV. At 78 to 616 the chain is on the cytoplasmic side; sequence LCQRFSRALM…WNKDFGDTTV (539 aa). A sufficient for interaction with CHMP1B region spans residues 112 to 196; sequence EAERVRVFHK…MAKDRLQLLE (85 aa). Residues 114–200 are required for interaction with microtubules; the sequence is ERVRVFHKQA…RLQLLEKMQP (87 aa). The region spanning 120 to 195 is the MIT domain; that stretch reads HKQAFEYISI…VMAKDRLQLL (76 aa). The segment at 224-266 is disordered; the sequence is HLQSESGAVPKRKDPLTHTSNSLPRSKTVMKTGSAGLSGHHRA. Residues 228–616 form a sufficient for microtubule severing region; sequence ESGAVPKRKD…WNKDFGDTTV (389 aa). Polar residues predominate over residues 240–254; that stretch reads THTSNSLPRSKTVMK. 2 positions are modified to phosphoserine: Ser-245 and Ser-268. Residues 270-328 form a required for interaction with microtubules and microtubule severing region; it reads SGLSMVSGVKQGSGPAPTTHKGTPKTNRTNKPSTPTTATRKKKDLKNFRNVDSNLANLI. A disordered region spans residues 278-312; it reads VKQGSGPAPTTHKGTPKTNRTNKPSTPTTATRKKK. A compositionally biased stretch (polar residues) spans 289–307; sequence HKGTPKTNRTNKPSTPTTA. Position 306 is a phosphothreonine (Thr-306). The short motif at 309–312 is the Nuclear localization signal element; the sequence is RKKK. Residues 310 to 312 are required for interaction with microtubules; it reads KKK. 382–389 contacts ATP; the sequence is GPPGNGKT. Ser-597 bears the Phosphoserine mark.

Belongs to the AAA ATPase family. Spastin subfamily. Homohexamer. Mostly monomeric, but assembles into hexameric structure for short periods of time. Oligomerization seems to be a prerequisite for catalytic activity. Binding to ATP in a cleft between two adjacent subunits stabilizes the homohexameric form. Binds to microtubules at least in part via the alpha-tubulin and beta-tubulin tails. The hexamer adopts a ring conformation through which microtubules pass prior to being severed. Does not interact strongly with tubulin heterodimers. Interacts (via MIT domain) with CHMP1B; the interaction is direct. Interacts with SSNA1. Interacts with ATL1. Interacts with RTN1. Interacts with ZFYVE27. Isoform 1 but not isoform 3 interacts with RTN2. Interacts with REEP1. Interacts (via MIT domain) with IST1. As to expression, expressed in brain, heart, kidney, liver, lung, pancreas, placenta and skeletal muscle. The short isoforms may predominate in brain and spinal cord.

The protein localises to the membrane. It is found in the endoplasmic reticulum. It localises to the midbody. Its subcellular location is the cytoplasm. The protein resides in the cytoskeleton. The protein localises to the microtubule organizing center. It is found in the centrosome. It localises to the perinuclear region. Its subcellular location is the nucleus. The protein resides in the spindle. The protein localises to the cell projection. It is found in the axon. It localises to the endoplasmic reticulum membrane. Its subcellular location is the nucleus membrane. The protein resides in the lipid droplet. The protein localises to the endosome. The enzyme catalyses n ATP + n H2O + a microtubule = n ADP + n phosphate + (n+1) alpha/beta tubulin heterodimers.. Allosteric enzyme with a cooperative mechanism; at least two neighbor subunits influence each other strongly in spastin hexamers. Microtubule binding promotes cooperative interactions among spastin subunits. ATP-bound enzyme interacts strongly and cooperatively with microtubules; this interaction stimulates ATP hydrolysis. Functionally, ATP-dependent microtubule severing protein that specifically recognizes and cuts microtubules that are polyglutamylated. Preferentially recognizes and acts on microtubules decorated with short polyglutamate tails: severing activity increases as the number of glutamates per tubulin rises from one to eight, but decreases beyond this glutamylation threshold. Severing activity is not dependent on tubulin acetylation or detyrosination. Microtubule severing promotes reorganization of cellular microtubule arrays and the release of microtubules from the centrosome following nucleation. It is critical for the biogenesis and maintenance of complex microtubule arrays in axons, spindles and cilia. SPAST is involved in abscission step of cytokinesis and nuclear envelope reassembly during anaphase in cooperation with the ESCRT-III complex. Recruited at the midbody, probably by IST1, and participates in membrane fission during abscission together with the ESCRT-III complex. Recruited to the nuclear membrane by IST1 and mediates microtubule severing, promoting nuclear envelope sealing and mitotic spindle disassembly during late anaphase. Required for membrane traffic from the endoplasmic reticulum (ER) to the Golgi and endosome recycling. Recruited by IST1 to endosomes and regulates early endosomal tubulation and recycling by mediating microtubule severing. Probably plays a role in axon growth and the formation of axonal branches. Its function is as follows. Involved in lipid metabolism by regulating the size and distribution of lipid droplets. This chain is Spastin, found in Homo sapiens (Human).